The primary structure comprises 370 residues: MQQPWKAVALSDLPLREDLKLQHAYGAPQLDVPVCLNVNENPYPPSPALVERIATAVADAARAANRYPDRDFAALRSHLAAYLTHDTGVTVDASSVWAANGSNEVIQQILQAFGGPGRSALAFTPAYPMYDEYCRTTFTRLHTLPRTEDFALDLNQALDSIRAHQPGVVLLTSPNNPTGTALPIDDIRAILDAAPGVVVVDEAYAEFRRHGVPSAVTLLPAYPRLIVTRTLSKAFKFAGGRVGYCACAPAIVEALKLVRLPYHLSAFTQAAACAALVARDEMLSQVEAIKAERDSTVDWLRGLGLTVADSDANFVMFGEFADRHRIWSGLLRRGVLIRESGPPPYLRVSIGTGAEMAAFRAALLDVMALE.

N6-(pyridoxal phosphate)lysine is present on Lys233.

Belongs to the class-II pyridoxal-phosphate-dependent aminotransferase family. Histidinol-phosphate aminotransferase subfamily. As to quaternary structure, homodimer. It depends on pyridoxal 5'-phosphate as a cofactor.

The catalysed reaction is L-histidinol phosphate + 2-oxoglutarate = 3-(imidazol-4-yl)-2-oxopropyl phosphate + L-glutamate. It functions in the pathway amino-acid biosynthesis; L-histidine biosynthesis; L-histidine from 5-phospho-alpha-D-ribose 1-diphosphate: step 7/9. In Burkholderia lata (strain ATCC 17760 / DSM 23089 / LMG 22485 / NCIMB 9086 / R18194 / 383), this protein is Histidinol-phosphate aminotransferase 3.